A 339-amino-acid chain; its full sequence is Uricase (339 aa).

Residues lysine 33 and threonine 78 each act as charge relay system in the active site. Urate contacts are provided by threonine 78, aspartate 79, phenylalanine 201, arginine 218, valine 266, glutamine 267, and asparagine 293. Histidine 295 functions as the Charge relay system in the catalytic mechanism. A Microbody targeting signal motif is present at residues 337–339; it reads SHL.

The protein belongs to the uricase family.

Its subcellular location is the peroxisome. The enzyme catalyses urate + O2 + H2O = 5-hydroxyisourate + H2O2. Its pathway is purine metabolism; urate degradation; (S)-allantoin from urate: step 1/3. Its function is as follows. Catalyzes the oxidation of uric acid to 5-hydroxyisourate, which is further processed to form (S)-allantoin. The polypeptide is Uricase (Uro) (Drosophila subobscura (Fruit fly)).